Reading from the N-terminus, the 2068-residue chain is uncharacterized protein (2068 aa).

A run of 2 helical transmembrane segments spans residues 3–23 (FFII…NFCS) and 51–71 (TIYL…YYYI). Positions 975–998 (QMHSGEDEKEELGEPKEKGSKSCQ) are enriched in basic and acidic residues. The interval 975–1030 (QMHSGEDEKEELGEPKEKGSKSCQEEEEQDEEEEDEDEEEEEDQGVNNYDNYVDGV) is disordered. Over residues 999 to 1018 (EEEEQDEEEEDEDEEEEEDQ) the composition is skewed to acidic residues. A helical membrane pass occupies residues 1890–1910 (FLYNLSFIYNVYNYLILIYIY).

Its subcellular location is the membrane. This is an uncharacterized protein from Plasmodium falciparum (isolate 3D7).